The following is a 294-amino-acid chain: 4-hydroxy-tetrahydrodipicolinate synthase (294 aa).

T44 contributes to the pyruvate binding site. Y132 functions as the Proton donor/acceptor in the catalytic mechanism. K160 (schiff-base intermediate with substrate) is an active-site residue. V202 provides a ligand contact to pyruvate.

This sequence belongs to the DapA family. As to quaternary structure, homotetramer; dimer of dimers.

Its subcellular location is the cytoplasm. The catalysed reaction is L-aspartate 4-semialdehyde + pyruvate = (2S,4S)-4-hydroxy-2,3,4,5-tetrahydrodipicolinate + H2O + H(+). Its pathway is amino-acid biosynthesis; L-lysine biosynthesis via DAP pathway; (S)-tetrahydrodipicolinate from L-aspartate: step 3/4. Functionally, catalyzes the condensation of (S)-aspartate-beta-semialdehyde [(S)-ASA] and pyruvate to 4-hydroxy-tetrahydrodipicolinate (HTPA). This Leptospira biflexa serovar Patoc (strain Patoc 1 / Ames) protein is 4-hydroxy-tetrahydrodipicolinate synthase.